A 461-amino-acid chain; its full sequence is Probable Xaa-Pro aminopeptidase PEPP (461 aa).

4 residues coordinate Mn(2+): Asp257, Asp268, Glu391, and Glu431.

Belongs to the peptidase M24B family. Mn(2+) serves as cofactor.

The catalysed reaction is Release of any N-terminal amino acid, including proline, that is linked to proline, even from a dipeptide or tripeptide.. Its function is as follows. Catalyzes the removal of a penultimate prolyl residue from the N-termini of peptides. The protein is Probable Xaa-Pro aminopeptidase PEPP (PEPP) of Colletotrichum graminicola (strain M1.001 / M2 / FGSC 10212) (Maize anthracnose fungus).